We begin with the raw amino-acid sequence, 190 residues long: Xanthine phosphoribosyltransferase 2 (190 aa).

Positions 20 and 27 each coordinate xanthine. Position 129-133 (129-133) interacts with 5-phospho-alpha-D-ribose 1-diphosphate; that stretch reads ANGCA. Lysine 157 contacts xanthine.

This sequence belongs to the purine/pyrimidine phosphoribosyltransferase family. Xpt subfamily. As to quaternary structure, homodimer.

Its subcellular location is the cytoplasm. The enzyme catalyses XMP + diphosphate = xanthine + 5-phospho-alpha-D-ribose 1-diphosphate. Its pathway is purine metabolism; XMP biosynthesis via salvage pathway; XMP from xanthine: step 1/1. In terms of biological role, converts the preformed base xanthine, a product of nucleic acid breakdown, to xanthosine 5'-monophosphate (XMP), so it can be reused for RNA or DNA synthesis. The sequence is that of Xanthine phosphoribosyltransferase 2 from Clostridium botulinum (strain ATCC 19397 / Type A).